Here is a 259-residue protein sequence, read N- to C-terminus: Undecaprenyl-diphosphatase 3 (259 aa).

The next 8 membrane-spanning stretches (helical) occupy residues 1-21 (MNWLEAFILGIIQGLTEFLPI), 39-59 (AGLFLDTMLHIGTLLAVFIYY), 71-91 (FSKLMLLLIVGTIPAVVIGLL), 99-119 (ISKTGITIGWEFLVSGFFLYM), 133-153 (ITYKDALIIGSFQAAAIFPAI), 174-194 (AYFSFLLSTPAIVGAIILQFV), 208-228 (SLIVGTLSAAFFGYIAVSWMI), and 239-259 (FAYYVWGLGILILMLQFTDVF).

This sequence belongs to the UppP family.

The protein resides in the cell membrane. It carries out the reaction di-trans,octa-cis-undecaprenyl diphosphate + H2O = di-trans,octa-cis-undecaprenyl phosphate + phosphate + H(+). Its function is as follows. Catalyzes the dephosphorylation of undecaprenyl diphosphate (UPP). Confers resistance to bacitracin. This is Undecaprenyl-diphosphatase 3 from Bacillus cereus (strain ATCC 14579 / DSM 31 / CCUG 7414 / JCM 2152 / NBRC 15305 / NCIMB 9373 / NCTC 2599 / NRRL B-3711).